The primary structure comprises 477 residues: Adenosylhomocysteinase (477 aa).

Residues Thr63, Asp142, and Glu202 each contribute to the substrate site. 203–205 is an NAD(+) binding site; sequence TTT. 2 residues coordinate substrate: Lys232 and Asp236. NAD(+)-binding positions include Asn237, 266–271, Glu289, Asn324, 345–347, and Asn390; these read GYGDVG and IGH.

The protein belongs to the adenosylhomocysteinase family. It depends on NAD(+) as a cofactor.

Its subcellular location is the cytoplasm. The enzyme catalyses S-adenosyl-L-homocysteine + H2O = L-homocysteine + adenosine. It functions in the pathway amino-acid biosynthesis; L-homocysteine biosynthesis; L-homocysteine from S-adenosyl-L-homocysteine: step 1/1. May play a key role in the regulation of the intracellular concentration of adenosylhomocysteine. This is Adenosylhomocysteinase from Methylibium petroleiphilum (strain ATCC BAA-1232 / LMG 22953 / PM1).